The sequence spans 93 residues: Class II hydrophobin 1 (93 aa).

Positions 1 to 16 are cleaved as a signal peptide; the sequence is MKFFAVAALFVASAMA. Intrachain disulfides connect Cys-24–Cys-74, Cys-35–Cys-65, Cys-36–Cys-48, and Cys-75–Cys-86.

Belongs to the cerato-ulmin hydrophobin family. In terms of assembly, interacts with maize ubiquilin 1-like (UBL) protein. Homotetramer. Further self-assembles to form highly ordered films at water-air interfaces through intermolecular interactions.

It is found in the cell membrane. Functionally, aerial growth, conidiation, and dispersal of filamentous fungi in the environment rely upon a capability of their secreting small amphipathic proteins called hydrophobins (HPBs) with low sequence identity. Class I can self-assemble into an outermost layer of rodlet bundles on aerial cell surfaces, conferring cellular hydrophobicity that supports fungal growth, development and dispersal; whereas Class II form highly ordered films at water-air interfaces through intermolecular interactions but contribute nothing to the rodlet structure. Hyd1 is a class II hydrophobin that acts as an elicitor of induced systemic resistance (ISR) in plants. During interaction with the plant, binds with the maize target protein UBL in order to recruit more UBL proteins in maize roots to elicit plant defense responses, including cell death as well as brassinosteroid, jasmonate (JA) and ethylene (ET) signaling. The protein is Class II hydrophobin 1 of Trichoderma harzianum (Hypocrea lixii).